An 87-amino-acid chain; its full sequence is HssA/B-like protein 31 (87 aa).

The protein belongs to the hssA/B family.

The polypeptide is HssA/B-like protein 31 (hssl31) (Dictyostelium discoideum (Social amoeba)).